The sequence spans 190 residues: Large ribosomal subunit protein bL25 (190 aa).

The protein belongs to the bacterial ribosomal protein bL25 family. CTC subfamily. As to quaternary structure, part of the 50S ribosomal subunit; part of the 5S rRNA/L5/L18/L25 subcomplex. Contacts the 5S rRNA. Binds to the 5S rRNA independently of L5 and L18.

Functionally, this is one of the proteins that binds to the 5S RNA in the ribosome where it forms part of the central protuberance. The protein is Large ribosomal subunit protein bL25 of Neisseria meningitidis serogroup C (strain 053442).